A 525-amino-acid polypeptide reads, in one-letter code: GMP synthase [glutamine-hydrolyzing] (525 aa).

The Glutamine amidotransferase type-1 domain occupies Arg-9–Leu-207. Cys-86 acts as the Nucleophile in catalysis. Active-site residues include His-181 and Glu-183. Positions Trp-208–Arg-400 constitute a GMPS ATP-PPase domain. Ser-235–Ser-241 provides a ligand contact to ATP.

In terms of assembly, homodimer.

The catalysed reaction is XMP + L-glutamine + ATP + H2O = GMP + L-glutamate + AMP + diphosphate + 2 H(+). It functions in the pathway purine metabolism; GMP biosynthesis; GMP from XMP (L-Gln route): step 1/1. Catalyzes the synthesis of GMP from XMP. The chain is GMP synthase [glutamine-hydrolyzing] from Pectobacterium carotovorum subsp. carotovorum (strain PC1).